Here is a 351-residue protein sequence, read N- to C-terminus: Histidinol-phosphate aminotransferase (351 aa).

N6-(pyridoxal phosphate)lysine is present on lysine 213.

This sequence belongs to the class-II pyridoxal-phosphate-dependent aminotransferase family. Histidinol-phosphate aminotransferase subfamily. As to quaternary structure, homodimer. Pyridoxal 5'-phosphate serves as cofactor.

The enzyme catalyses L-histidinol phosphate + 2-oxoglutarate = 3-(imidazol-4-yl)-2-oxopropyl phosphate + L-glutamate. It catalyses the reaction L-histidine + 2-oxoglutarate = 3-(imidazol-5-yl)pyruvate + L-glutamate. It participates in amino-acid biosynthesis; L-histidine biosynthesis; L-histidine from 5-phospho-alpha-D-ribose 1-diphosphate: step 7/9. The protein is Histidinol-phosphate aminotransferase of Caldanaerobacter subterraneus subsp. tengcongensis (strain DSM 15242 / JCM 11007 / NBRC 100824 / MB4) (Thermoanaerobacter tengcongensis).